Reading from the N-terminus, the 222-residue chain is Tegument protein UL26 (222 aa).

Belongs to the herpesviridae US22 family. As to quaternary structure, interacts with UL25. Interacts with ISGylation machinery components ISG15, UBA7 and HERC5; these interactions inhibit global protein ISGylation. ISGylated; ISGylation regulates UL26 stability and inhibits its activities to suppress NF-kappa-B signaling.

The protein resides in the virion tegument. The protein localises to the host nucleus. Its function is as follows. Plays a role in the inhibition of host NF-kappa-B. This inhibition affects both the canonical and the non-canonical pathways. Blocks the induction of host IKK phosphorylation. May also influence the normal phosphorylation state of several tegument proteins including pp28 in virions. Also suppresses virus-induced ISGylation independent of its own ISGylation. The polypeptide is Tegument protein UL26 (UL26) (Homo sapiens (Human)).